The sequence spans 125 residues: Small ribosomal subunit protein eS6 (125 aa).

This sequence belongs to the eukaryotic ribosomal protein eS6 family.

The chain is Small ribosomal subunit protein eS6 from Thermococcus onnurineus (strain NA1).